A 104-amino-acid chain; its full sequence is uncharacterized protein (104 aa).

The first 18 residues, M1–A18, serve as a signal peptide directing secretion. Residue N27 is glycosylated (N-linked (GlcNAc...) asparagine; by host).

This is an uncharacterized protein from Fowl adenovirus A serotype 1 (strain CELO / Phelps) (FAdV-1).